Consider the following 535-residue polypeptide: MPLPNHVTSHLRSLQLAPAAVHYNLKRPRLYEEALDRNEGQLAAGGPLVTRTAPYTGRSPKDRFIVRDASVADQINWGEVNQPTDRATFDHLHERMAEHAEGRDLFVQDLHAGWDESYRLPVRIITEKAWHSLFARNMFVRPDGPVPDSFEPGFTVVDLCEFEADPERDGTHSEAAVFVDIAQNLILIGGTHYGGEIKKSIFSVLNYMLPEEGVLPMHCSANEGEDGDTAVFFGLSGTGKTTLSADASRTLIGDDEHGWSDRGVYNFEGGCYAKMIDITPESEPEIHGTTEEFGTILENVIVDPDTREPDFSDDTITQNTRGSYPLHYIPNTSSDGRGGHPDHVLFLTYDAFGVLPPVSELSPAQAMYHFLSGYTAKVAGTEAGVNEPKATFSTCFGEPFMVRDPSVYAELLGQKIRRHDTDCWLVNTGMTGGPYGVGHRIELDHTRAMVDAILDGTLGTVARTRDPVFGLSIPDRVPGVPDSVLTPRQTWGDPQAYDQHARELVDAFADNFETYVEQVGTEVRAAGPSLETIRG.

Substrate-binding residues include Arg58, Tyr193, and Lys199. ATP-binding positions include Lys199, His218, and 234-242 (GLSGTGKTT). Lys199 and His218 together coordinate Mn(2+). Asp255 is a binding site for Mn(2+). Residues Glu283, Arg321, 440–441 (RI), and Thr446 contribute to the ATP site. Position 321 (Arg321) interacts with substrate.

It belongs to the phosphoenolpyruvate carboxykinase (ATP) family. It depends on Mn(2+) as a cofactor.

It is found in the cytoplasm. The enzyme catalyses oxaloacetate + ATP = phosphoenolpyruvate + ADP + CO2. Its pathway is carbohydrate biosynthesis; gluconeogenesis. In terms of biological role, involved in the gluconeogenesis. Catalyzes the conversion of oxaloacetate (OAA) to phosphoenolpyruvate (PEP) through direct phosphoryl transfer between the nucleoside triphosphate and OAA. In Salinibacter ruber (strain DSM 13855 / M31), this protein is Phosphoenolpyruvate carboxykinase (ATP) 1.